A 173-amino-acid polypeptide reads, in one-letter code: Cytochrome c-type biogenesis protein CcmE (173 aa).

Over 1–8 (MNPRRKSR) the chain is Cytoplasmic. A helical; Signal-anchor for type II membrane protein transmembrane segment spans residues 9-29 (FKLVIFVVLGIAIASGLMLYA). The Periplasmic segment spans residues 30–173 (LRQNIDLFYT…RDRQEKEGAK (144 aa)). His-131 and Tyr-135 together coordinate heme. Residues 152–173 (GIKAADLKGESARDRQEKEGAK) are disordered. Over residues 156–173 (ADLKGESARDRQEKEGAK) the composition is skewed to basic and acidic residues.

This sequence belongs to the CcmE/CycJ family.

It is found in the cell inner membrane. Functionally, heme chaperone required for the biogenesis of c-type cytochromes. Transiently binds heme delivered by CcmC and transfers the heme to apo-cytochromes in a process facilitated by CcmF and CcmH. This is Cytochrome c-type biogenesis protein CcmE from Haemophilus influenzae (strain PittEE).